We begin with the raw amino-acid sequence, 140 residues long: uncharacterized protein (140 aa).

This is an uncharacterized protein from Homo sapiens (Human).